A 90-amino-acid chain; its full sequence is Putative toxin RelE1 (90 aa).

The protein belongs to the RelE toxin family.

Toxic component of a type II toxin-antitoxin (TA) system. Its cognate antitoxin is RelB1 (Potential). This Methanocaldococcus jannaschii (strain ATCC 43067 / DSM 2661 / JAL-1 / JCM 10045 / NBRC 100440) (Methanococcus jannaschii) protein is Putative toxin RelE1 (relE1).